Reading from the N-terminus, the 646-residue chain is Esterase EstA (646 aa).

The N-terminal stretch at 1-24 (MIRMALKPLVAACLLASLSTAPQA) is a signal peptide. Over 25-397 (APSPYSTLVV…DSAASGDGNG (373 aa)) the chain is Extracellular. The active-site Nucleophile is Ser38. Residues Asp310 and His313 contribute to the active site. Residues 366–646 (QNVGQWRGFV…SVSLALSLDF (281 aa)) form the Autotransporter domain. The beta stranded transmembrane segment at 398 to 408 (YNLTLGGSYRI) threads the bilayer. Over 409–410 (DE) the chain is Periplasmic. A beta stranded membrane pass occupies residues 411-421 (AWRAGVAAGFY). Topologically, residues 422 to 437 (RQKLEAGAKDSDYRMN) are extracellular. A beta stranded membrane pass occupies residues 438-447 (SYMASAFVQY). Over 448-451 (QENR) the chain is Periplasmic. Residues 452–461 (WWADAALTGG) traverse the membrane as a beta stranded segment. At 462–488 (YLDYDDLKRKFALGGGERSEKGDTNGH) the chain is on the extracellular side. Residues 489–500 (LWAFSARLGYDI) form a beta stranded membrane-spanning segment. Over 501–507 (AQQADSP) the chain is Periplasmic. A beta stranded membrane pass occupies residues 508 to 518 (WHLSPFVSADY). Residues 519-547 (ARVEVDGYSEKGASATALDYDDQKRSSKR) are Extracellular-facing. The chain crosses the membrane as a beta stranded span at residues 548 to 558 (LGAGLQGKYAF). Residues 559–561 (GSD) lie on the Periplasmic side of the membrane. The chain crosses the membrane as a beta stranded span at residues 562-571 (TQLFAEYAHE). The Extracellular portion of the chain corresponds to 572–605 (REYEDDTQDLTMSLNSLPGNRFTLEGYTPQDHLN). Residues 606–615 (RVSLGFSQKL) traverse the membrane as a beta stranded segment. The Periplasmic portion of the chain corresponds to 616 to 618 (APE). The beta stranded transmembrane segment at 619 to 628 (LSLRGGYNWR) threads the bilayer. At 629–636 (KGEDDTQQ) the chain is on the extracellular side. Residues 637–646 (SVSLALSLDF) traverse the membrane as a beta stranded segment.

Belongs to the 'GDSL' lipolytic enzyme family.

Its subcellular location is the cell outer membrane. It catalyses the reaction a carboxylic ester + H2O = an alcohol + a carboxylate + H(+). Its function is as follows. Esterase whose enzymatic activity is required for rhamnolipid production, all kinds of cell motility (swimming, swarming, and twitching), and biofilm formation; the exact role of EstA in these processes is unclear. In vitro, has pronounced esterase activities towards p-nitrophenyl esters of short acyl chain length (C4-C6) and Tween detergents. Also shows relatively high activity towards beta-naphthyl butyrate, whereas its activities towards triacylglycerols and acyls-CoA are negligible. In Pseudomonas aeruginosa (strain ATCC 15692 / DSM 22644 / CIP 104116 / JCM 14847 / LMG 12228 / 1C / PRS 101 / PAO1), this protein is Esterase EstA (estA).